A 376-amino-acid polypeptide reads, in one-letter code: Probable ATP-dependent RNA helicase YfmL (376 aa).

One can recognise a Helicase ATP-binding domain in the interval 35–205 (AQLIMDGKDV…RELAQEPEVL (171 aa)). 48–55 (SPTGTGKT) contacts ATP. The DEAD box motif lies at 153 to 156 (DETD). The 144-residue stretch at 231–374 (KLLQKLSRLE…EAVYAGGKLK (144 aa)) folds into the Helicase C-terminal domain.

The protein belongs to the DEAD box helicase family.

It catalyses the reaction ATP + H2O = ADP + phosphate + H(+). Its function is as follows. A probable DEAD-box RNA helicase that plays a role in ribosomal 50S subunit assembly. May be a non-specific RNA helicase. This Bacillus subtilis (strain 168) protein is Probable ATP-dependent RNA helicase YfmL (yfmL).